Consider the following 183-residue polypeptide: Ras-related protein Rap-2a (183 aa).

10–17 is a GTP binding site; that stretch reads GSGGVGKS. The short motif at 32–40 is the Effector region element; it reads YDPTIEDFY. GTP contacts are provided by residues 57–61 and 116–119; these read DTAGT and NKVD. S-palmitoyl cysteine attachment occurs at residues Cys-176 and Cys-177. Cys-180 bears the Cysteine methyl ester mark. The S-farnesyl cysteine moiety is linked to residue Cys-180. The propeptide at 181-183 is removed in mature form; the sequence is NIQ.

This sequence belongs to the small GTPase superfamily. Ras family. As to quaternary structure, interacts with PLCE1. Interacts with ARHGAP29, SGSM1, SGSM2 and SGSM3. Interacts (GTP-bound form preferentially) with MAP4K4. Interacts with MINK1. Interacts with cytoskeletal actin. Interacts (GTP-bound form) with RUNDC3A. Interacts (GTP-bound form preferentially) with TNIK (via the CNH domain); the interaction is direct and recruits RAP2A to the E3 ubiquitin ligase NEDD4. Interacts with RGS14; the interaction is GTP-dependent. In terms of processing, ubiquitinated; undergoes 'Lys-63' monoubiquitination and diubiquitination by NEDD4. Multiple lysine residues are probably modified. Ubiquitination requires TNIK, prevents interaction with effectors and inactivates RAP2A. Ubiquitination by the ECS(RAB40B) complex leads to RAP2A localization to lamellipodia plasma membrane, activation, and regulation of sorting at early endosomes for recycling to the lamellipodia plasma membrane. Post-translationally, palmitoylated. Palmitoylation is required for association with recycling endosome membranes and activation of TNIK. In terms of tissue distribution, expressed in granular layer of the cerebellum, forebrain, striatum, layer V of the cortex, olfactory cortex, tubercules, subthalamic and hippocampus, particularly in the CA2 region, to a lesser extent in the CA1 region and the external layer of the dentate gyrus. Expressed in neurons.

Its subcellular location is the midbody. The protein localises to the cell projection. It is found in the lamellipodium membrane. The protein resides in the golgi apparatus. It localises to the recycling endosome membrane. Its subcellular location is the lysosome. It carries out the reaction GTP + H2O = GDP + phosphate + H(+). Its activity is regulated as follows. Activated by the guanine nucleotide-exchange factors RAPGEF3 and RAPGEF4 in a cAMP-dependent manner. Nucleotide exchange is also specifically stimulated by RAPGEF5, RASGEF1A and RASGEF1B. Small GTP-binding protein which cycles between a GDP-bound inactive and a GTP-bound active form. In its active form interacts with and regulates several effectors including MAP4K4, MINK1 and TNIK. Part of a signaling complex composed of NEDD4, RAP2A and TNIK which regulates neuronal dendrite extension and arborization during development. More generally, it is part of several signaling cascades and may regulate cytoskeletal rearrangements, cell migration, cell adhesion and cell spreading. This Mus musculus (Mouse) protein is Ras-related protein Rap-2a.